Consider the following 999-residue polypeptide: Protein Smaug (999 aa).

Residues 1 to 36 (MKYATGTDNAMTSGISGQTNNSNSASNEMQPTTSTP) show a composition bias toward polar residues. Disordered regions lie at residues 1–69 (MKYA…QSQP) and 329–349 (LCPA…IAPP). Composition is skewed to low complexity over residues 44-69 (TSTA…QSQP) and 329-338 (LCPASGSRSS). Phosphoserine is present on residues Ser-564 and Ser-575. The interval 583-763 (EFKPNYIKFH…KDLKFKLSKM (181 aa)) is interaction with cup. An SAM domain is found at 600 to 654 (GIGLWLKSLRLHKYIELFKNMTYEEMLLITEDFLQSVGVTKGASHKLALCIDKLK). Disordered regions lie at residues 773-892 (HVKP…MQQM) and 955-977 (QQSQ…EQQP). Composition is skewed to polar residues over residues 801–822 (KNGS…NFSL) and 854–864 (HQPQYKSSSYP). Ser-972 bears the Phosphoserine mark.

It belongs to the SMAUG family. In terms of assembly, interacts with oskar (osk). Binds to the 3'-UTR of nanos (nos). Interacts with cup, which in turn recruits eIF4-E, leading to an indirect interaction between smg and eIF4-E that prevents mRNA translation. Forms a complex with aub, twin, AGO3, nanos mRNA and piRNAs that targets the nanos 3'-untranslated region, in early embryos. In terms of tissue distribution, at syncytial blastoderm, it is located throughout the bulk cytoplasm and pole plasm. By the time of cellularization, it concentrates at the posterior pole.

Its subcellular location is the cytoplasm. In terms of biological role, translation regulator that binds to the 3'-UTR of specific mRNAs such as nanos (nos) and prevents their translation. Prevents translation of unlocalized nanos in the bulk cytoplasm via the recruitment of cup. The polypeptide is Protein Smaug (smg) (Drosophila melanogaster (Fruit fly)).